Consider the following 229-residue polypeptide: uncharacterized protein (229 aa).

The next 7 membrane-spanning stretches (helical) occupy residues 1 to 21 (MFGT…GGIF), 32 to 52 (ILMQ…ITQH), 58 to 78 (YPIL…IINL), 100 to 120 (TAVL…EAAL), 139 to 159 (IVLA…LFSW), 178 to 198 (LINE…LSIL), and 206 to 226 (LNLL…HAFG).

It localises to the cell membrane. This is an uncharacterized protein from Bacillus subtilis (strain 168).